We begin with the raw amino-acid sequence, 440 residues long: RUN domain-containing protein 3A (440 aa).

One can recognise an RUN domain in the interval 52-184 (DDSSEEFVNF…IDFSFCLKGE (133 aa)). The interval 213–233 (DDRESVGGSSSEDSSPEHPYL) is disordered. Positions 262–317 (YLEELVRLRETQLKNLEAENKRLTQRISEQAEQSLQEKHQLEGVILELQEQLTGLL) form a coiled coil. Residues 374-402 (LSSESQRLDGKQDGEPWGPIGKDPTPSML) form a disordered region.

Belongs to the RUNDC3 family.

The chain is RUN domain-containing protein 3A (rundc3a) from Xenopus tropicalis (Western clawed frog).